The chain runs to 1203 residues: DNA-directed RNA polymerase I subunit RPA135 (1203 aa).

S2 is modified (N-acetylserine). S81 carries the post-translational modification Phosphoserine. The C4-type zinc finger occupies 1104–1131 (CRECGSILTTQQSVPRIGSISTVCCRRC). Residue S1156 is modified to Phosphoserine.

The protein belongs to the RNA polymerase beta chain family. Component of the RNA polymerase I (Pol I) complex consisting of 14 subunits: RPA135, RPA190, RPC40, RPA14, RPB5, RPO26, RPA43, RPB8, RPA12, RPB10, RPC19, RPC10, RPA49 and RPA34. The complex is composed of a horseshoe-shaped core containing ten subunits (RPA135, RPA190, RPB5, RPO26, RPB8, RPB10, RPC10, RPA12, RPC19 and RPC40) where RPA135 and RPA190 form the DNA-binding cleft. Outside of the core, RPA14 and RPA43 form the stalk that mediates interactions with transcription initiation factors and newly synthesized RNA.

Its subcellular location is the nucleus. It localises to the nucleolus. It carries out the reaction RNA(n) + a ribonucleoside 5'-triphosphate = RNA(n+1) + diphosphate. Its function is as follows. DNA-dependent RNA polymerases catalyze the transcription of DNA into RNA using the four ribonucleoside triphosphates as substrates. Component of RNA polymerase I (Pol I) which synthesizes ribosomal RNA precursors. Besides, RNA polymerase I has intrinsic RNA cleavage activity. RPA190 and RPA135 both contribute to the polymerase catalytic activity and together form the Pol I active center. In addition, subunit RPA12 contributes a catalytic zinc ribbon that is required for RNA cleavage by Pol I. A single stranded DNA template strand of the promoter is positioned within the central active site cleft of Pol I. A bridging helix emanates from RPA190 and crosses the cleft near the catalytic site and is thought to promote translocation of Pol I by acting as a ratchet that moves the RNA-DNA hybrid through the active site by switching from straight to bent conformations at each step of nucleotide addition. This chain is DNA-directed RNA polymerase I subunit RPA135 (RPA135), found in Saccharomyces cerevisiae (strain ATCC 204508 / S288c) (Baker's yeast).